The sequence spans 630 residues: Peptidyl-prolyl cis-trans isomerase cyp15 (630 aa).

Residues 1-46 form a disordered region; the sequence is MPEDSNTNDNNKRPLEDNNAVDGESDDDIGPMLPPPPGEDAPRKKK. WD repeat units follow at residues 70–108, 113–152, 157–198, 203–242, and 258–301; these read MHRD…IEFV, SHLS…MINM, YKPK…KPLH, MHSK…ALPD, and RKKK…REYD. Residues 475 to 629 enclose the PPIase cyclophilin-type domain; that stretch reads LGTSAIIRTT…DDIKIINIDI (155 aa).

The protein belongs to the cyclophilin-type PPIase family.

The enzyme catalyses [protein]-peptidylproline (omega=180) = [protein]-peptidylproline (omega=0). Its function is as follows. PPIases accelerate the folding of proteins. It catalyzes the cis-trans isomerization of proline imidic peptide bonds in oligopeptides. The polypeptide is Peptidyl-prolyl cis-trans isomerase cyp15 (cyp15) (Rhizopus delemar (strain RA 99-880 / ATCC MYA-4621 / FGSC 9543 / NRRL 43880) (Mucormycosis agent)).